We begin with the raw amino-acid sequence, 236 residues long: Ribose-5-phosphate isomerase A (236 aa).

Substrate is bound by residues 28–31, 83–86, and 96–99; these read TGST, DGAD, and KGGG. The Proton acceptor role is filled by E105. K123 is a substrate binding site.

Belongs to the ribose 5-phosphate isomerase family. As to quaternary structure, homodimer.

It carries out the reaction aldehydo-D-ribose 5-phosphate = D-ribulose 5-phosphate. The protein operates within carbohydrate degradation; pentose phosphate pathway; D-ribose 5-phosphate from D-ribulose 5-phosphate (non-oxidative stage): step 1/1. Its function is as follows. Catalyzes the reversible conversion of ribose-5-phosphate to ribulose 5-phosphate. The polypeptide is Ribose-5-phosphate isomerase A (Methylorubrum extorquens (strain CM4 / NCIMB 13688) (Methylobacterium extorquens)).